A 774-amino-acid chain; its full sequence is Penicillin acylase 2 proenzyme (774 aa).

Residue Ser-240 is the Nucleophile of the active site.

Belongs to the peptidase S45 family. Heterodimer of a small subunit and a large subunit processed from the same precursor.

The catalysed reaction is a penicillin + H2O = 6-aminopenicillanate + a carboxylate. In Pseudomonas sp. (strain SE83), this protein is Penicillin acylase 2 proenzyme (acyII).